A 570-amino-acid polypeptide reads, in one-letter code: Periplasmic trehalase (570 aa).

A signal peptide spans 1 to 34 (MIPPEIRRSVLLQKAIKLALAGTLLTFASFSATA). Substrate-binding positions include Arg159, 166 to 167 (WD), Asn203, 212 to 214 (HSQ), 284 to 286 (RPE), and Gly317. Active-site proton donor/acceptor residues include Asp319 and Glu503. Glu518 lines the substrate pocket. A disordered region spans residues 544-570 (KPCDSVPSTRPASLSATPTKTPSAATQ). Residues 554–570 (PASLSATPTKTPSAATQ) are compositionally biased toward low complexity.

It belongs to the glycosyl hydrolase 37 family. In terms of assembly, monomer.

The protein resides in the periplasm. The catalysed reaction is alpha,alpha-trehalose + H2O = alpha-D-glucose + beta-D-glucose. Functionally, provides the cells with the ability to utilize trehalose at high osmolarity by splitting it into glucose molecules that can subsequently be taken up by the phosphotransferase-mediated uptake system. This Salmonella paratyphi C (strain RKS4594) protein is Periplasmic trehalase.